A 294-amino-acid polypeptide reads, in one-letter code: N-acetylmuramic acid 6-phosphate etherase (294 aa).

Positions Val-54–Lys-217 constitute an SIS domain. The Proton donor role is filled by Glu-82. Glu-113 is a catalytic residue.

This sequence belongs to the GCKR-like family. MurNAc-6-P etherase subfamily. In terms of assembly, homodimer.

It catalyses the reaction N-acetyl-D-muramate 6-phosphate + H2O = N-acetyl-D-glucosamine 6-phosphate + (R)-lactate. Its pathway is amino-sugar metabolism; N-acetylmuramate degradation. Functionally, specifically catalyzes the cleavage of the D-lactyl ether substituent of MurNAc 6-phosphate, producing GlcNAc 6-phosphate and D-lactate. This Bacillus cereus (strain 03BB102) protein is N-acetylmuramic acid 6-phosphate etherase.